The following is a 138-amino-acid chain: ATP synthase epsilon chain (138 aa).

The protein belongs to the ATPase epsilon chain family. In terms of assembly, F-type ATPases have 2 components, CF(1) - the catalytic core - and CF(0) - the membrane proton channel. CF(1) has five subunits: alpha(3), beta(3), gamma(1), delta(1), epsilon(1). CF(0) has three main subunits: a, b and c.

It localises to the cell inner membrane. In terms of biological role, produces ATP from ADP in the presence of a proton gradient across the membrane. This chain is ATP synthase epsilon chain, found in Polaromonas naphthalenivorans (strain CJ2).